The primary structure comprises 260 residues: Homeobox-leucine zipper protein HOX25 (260 aa).

Over residues 1 to 10 (MEDLVDELYG) the composition is skewed to acidic residues. Disordered regions lie at residues 1–24 (MEDLVDELYGVDEQGSSSAAARKR), 121–145 (ANGKSPSPSPAPAEQTAVPAAPESA), and 190–221 (SPESYFAGARSPPSSSEDDCGGAGSDDDYPSS). The segment at residues 19–79 (AAARKRRLTA…NRRARWKTKQ (61 aa)) is a DNA-binding region (homeobox). Residues 78-122 (KQLELDFDRLRAAHDELLAGRAALAADNESLRSQVILLTEKLQAN) are leucine-zipper. Residues 205-218 (SEDDCGGAGSDDDY) are compositionally biased toward acidic residues.

The protein belongs to the HD-ZIP homeobox family. Class I subfamily. In terms of tissue distribution, expressed in roots, leaf sheaths and blades and panicles.

The protein localises to the nucleus. In terms of biological role, probable transcription factor. The protein is Homeobox-leucine zipper protein HOX25 (HOX25) of Oryza sativa subsp. indica (Rice).